Here is a 140-residue protein sequence, read N- to C-terminus: Putative pre-16S rRNA nuclease (140 aa).

This sequence belongs to the YqgF nuclease family.

The protein resides in the cytoplasm. Functionally, could be a nuclease involved in processing of the 5'-end of pre-16S rRNA. This Aeromonas hydrophila subsp. hydrophila (strain ATCC 7966 / DSM 30187 / BCRC 13018 / CCUG 14551 / JCM 1027 / KCTC 2358 / NCIMB 9240 / NCTC 8049) protein is Putative pre-16S rRNA nuclease.